Reading from the N-terminus, the 1820-residue chain is Kinesin-like protein KIF20B (1820 aa).

The Kinesin motor domain occupies 58 to 479 (YLQVCLRIRP…LKFSAIAQKV (422 aa)). 152 to 159 (GLTNSGKT) contacts ATP. Serine 488 is modified (phosphoserine). 2 coiled-coil regions span residues 523-603 (ENSL…KIRE) and 674-793 (GFED…MENT). Threonine 560 carries the post-translational modification Phosphothreonine. The tract at residues 829 to 866 (SERKRVNENELQQDEPPAKKGSIHVSSAITEDQKKSEE) is disordered. A Phosphoserine modification is found at serine 997. The necessary and sufficient for interaction with SHTN1 stretch occupies residues 1050–1107 (ENSFHSSIEAIWEECKEIVKASSKKSHQIEELEQQIEKLQAEVKGYKDENNRLKEKEH). A compositionally biased stretch (basic and acidic residues) spans 1247–1264 (EEEEETNRQETEKLKEEL). The interval 1247 to 1275 (EEEEETNRQETEKLKEELSASSARTQNLK) is disordered. The segment covering 1265-1274 (SASSARTQNL) has biased composition (polar residues). The interaction with PIN1 stretch occupies residues 1560 to 1820 (IETQIMDIKP…KRRLRTKTAK (261 aa)). Phosphoserine is present on serine 1588. Threonine 1644 bears the Phosphothreonine; by CDK1 mark. Residues serine 1658, serine 1715, and serine 1740 each carry the phosphoserine modification. The segment covering 1760-1772 (LSNVEASKENVSQ) has biased composition (polar residues). A disordered region spans residues 1760-1781 (LSNVEASKENVSQPKRAKRKLY).

Belongs to the TRAFAC class myosin-kinesin ATPase superfamily. Kinesin family. In terms of assembly, oligomerizes (via kinesin motor domain). Associates with microtubules. Interacts (via C-terminal globular tail region) with PIN1 (via WW domain). Interacts with PRC1. Interacts with SHTN1 (via N-terminus); the interaction is direct and promotes the association of SHTN1 to microtubules in primary neurons. Phosphorylated during mitosis by CDK1. Brain, ovary, kidney and testis (at protein level). Overexpressed in bladder cancer cells (at protein level). Expressed in testis. Overexpressed in bladder cancer cells.

It is found in the nucleus. The protein localises to the cytoplasm. The protein resides in the cytoskeleton. Its subcellular location is the microtubule organizing center. It localises to the centrosome. It is found in the nucleolus. The protein localises to the nucleoplasm. The protein resides in the spindle. Its subcellular location is the spindle pole. It localises to the midbody. It is found in the cell projection. The protein localises to the axon. The protein resides in the growth cone. In terms of biological role, plus-end-directed motor enzyme that is required for completion of cytokinesis. Required for proper midbody organization and abscission in polarized cortical stem cells. Plays a role in the regulation of neuronal polarization by mediating the transport of specific cargos. Participates in the mobilization of SHTN1 and in the accumulation of PIP3 in the growth cone of primary hippocampal neurons in a tubulin and actin-dependent manner. In the developing telencephalon, cooperates with SHTN1 to promote both the transition from the multipolar to the bipolar stage and the radial migration of cortical neurons from the ventricular zone toward the superficial layer of the neocortex. Involved in cerebral cortex growth. Acts as an oncogene for promoting bladder cancer cells proliferation, apoptosis inhibition and carcinogenic progression. This Homo sapiens (Human) protein is Kinesin-like protein KIF20B.